Reading from the N-terminus, the 95-residue chain is MALQRSDVEKIAHLARLGLNEGELPRITDALNSILGLVDQMQAVDTTGIEPLAHPLETTQRLRPDQVTESNQRDRYQAVAPSTENGLYLVPKVID.

Belongs to the GatC family. Heterotrimer of A, B and C subunits.

The enzyme catalyses L-glutamyl-tRNA(Gln) + L-glutamine + ATP + H2O = L-glutaminyl-tRNA(Gln) + L-glutamate + ADP + phosphate + H(+). It carries out the reaction L-aspartyl-tRNA(Asn) + L-glutamine + ATP + H2O = L-asparaginyl-tRNA(Asn) + L-glutamate + ADP + phosphate + 2 H(+). In terms of biological role, allows the formation of correctly charged Asn-tRNA(Asn) or Gln-tRNA(Gln) through the transamidation of misacylated Asp-tRNA(Asn) or Glu-tRNA(Gln) in organisms which lack either or both of asparaginyl-tRNA or glutaminyl-tRNA synthetases. The reaction takes place in the presence of glutamine and ATP through an activated phospho-Asp-tRNA(Asn) or phospho-Glu-tRNA(Gln). The sequence is that of Aspartyl/glutamyl-tRNA(Asn/Gln) amidotransferase subunit C from Pseudomonas entomophila (strain L48).